Here is a 114-residue protein sequence, read N- to C-terminus: T cell receptor beta variable 6-5 (114 aa).

A signal peptide spans 1-21 (MSIGLLCCAALSLLWAGPVNA). In terms of domain architecture, Ig-like spans 22–114 (GVTQTPKFQV…TSVYFCASSY (93 aa)). Cys42 and Cys110 are oxidised to a cystine. A glycan (N-linked (GlcNAc...) asparagine) is linked at Asn84.

Alpha-beta TR is a heterodimer composed of an alpha and beta chain; disulfide-linked. The alpha-beta TR is associated with the transmembrane signaling CD3 coreceptor proteins to form the TR-CD3 (TcR or TCR). The assembly of alpha-beta TR heterodimers with CD3 occurs in the endoplasmic reticulum where a single alpha-beta TR heterodimer associates with one CD3D-CD3E heterodimer, one CD3G-CD3E heterodimer and one CD247 homodimer forming a stable octameric structure. CD3D-CD3E and CD3G-CD3E heterodimers preferentially associate with TR alpha and TR beta chains, respectively. The association of the CD247 homodimer is the last step of TcR assembly in the endoplasmic reticulum and is required for transport to the cell surface.

It is found in the cell membrane. In terms of biological role, v region of the variable domain of T cell receptor (TR) beta chain that participates in the antigen recognition. Alpha-beta T cell receptors are antigen specific receptors which are essential to the immune response and are present on the cell surface of T lymphocytes. Recognize peptide-major histocompatibility (MH) (pMH) complexes that are displayed by antigen presenting cells (APC), a prerequisite for efficient T cell adaptive immunity against pathogens. Binding of alpha-beta TR to pMH complex initiates TR-CD3 clustering on the cell surface and intracellular activation of LCK that phosphorylates the ITAM motifs of CD3G, CD3D, CD3E and CD247 enabling the recruitment of ZAP70. In turn ZAP70 phosphorylates LAT, which recruits numerous signaling molecules to form the LAT signalosome. The LAT signalosome propagates signal branching to three major signaling pathways, the calcium, the mitogen-activated protein kinase (MAPK) kinase and the nuclear factor NF-kappa-B (NF-kB) pathways, leading to the mobilization of transcription factors that are critical for gene expression and essential for T cell growth and differentiation. The T cell repertoire is generated in the thymus, by V-(D)-J rearrangement. This repertoire is then shaped by intrathymic selection events to generate a peripheral T cell pool of self-MH restricted, non-autoaggressive T cells. Post-thymic interaction of alpha-beta TR with the pMH complexes shapes TR structural and functional avidity. The chain is T cell receptor beta variable 6-5 from Homo sapiens (Human).